We begin with the raw amino-acid sequence, 67 residues long: Putative sodium channel alpha-toxin Acra5 (67 aa).

The LCN-type CS-alpha/beta domain occupies 2-65; it reads RDGYIMIKDT…VYGDRGVICR (64 aa). 4 disulfide bridges follow: Cys13–Cys64, Cys17–Cys40, Cys26–Cys45, and Cys30–Cys47. Arg67 is a propeptide (removed by a carboxypeptidase).

Belongs to the long (4 C-C) scorpion toxin superfamily. Sodium channel inhibitor family. Alpha subfamily. Expressed by the venom gland.

Its subcellular location is the secreted. In terms of biological role, alpha toxins bind voltage-independently at site-3 of sodium channels (Nav) and inhibit the inactivation of the activated channels, thereby blocking neuronal transmission. This chain is Putative sodium channel alpha-toxin Acra5, found in Androctonus crassicauda (Arabian fat-tailed scorpion).